The chain runs to 197 residues: Glycerol-3-phosphate acyltransferase (197 aa).

Transmembrane regions (helical) follow at residues I5 to L25, G54 to A74, A80 to L100, I112 to A132, and I153 to L173.

The protein belongs to the PlsY family. Probably interacts with PlsX.

It is found in the cell inner membrane. The enzyme catalyses an acyl phosphate + sn-glycerol 3-phosphate = a 1-acyl-sn-glycero-3-phosphate + phosphate. Its pathway is lipid metabolism; phospholipid metabolism. Catalyzes the transfer of an acyl group from acyl-phosphate (acyl-PO(4)) to glycerol-3-phosphate (G3P) to form lysophosphatidic acid (LPA). This enzyme utilizes acyl-phosphate as fatty acyl donor, but not acyl-CoA or acyl-ACP. The chain is Glycerol-3-phosphate acyltransferase from Rhodopseudomonas palustris (strain HaA2).